We begin with the raw amino-acid sequence, 294 residues long: 4-hydroxy-tetrahydrodipicolinate synthase (294 aa).

Threonine 44 serves as a coordination point for pyruvate. Tyrosine 132 (proton donor/acceptor) is an active-site residue. The active-site Schiff-base intermediate with substrate is the lysine 161. Residue isoleucine 206 coordinates pyruvate.

The protein belongs to the DapA family. As to quaternary structure, homotetramer; dimer of dimers.

It is found in the cytoplasm. It carries out the reaction L-aspartate 4-semialdehyde + pyruvate = (2S,4S)-4-hydroxy-2,3,4,5-tetrahydrodipicolinate + H2O + H(+). It participates in amino-acid biosynthesis; L-lysine biosynthesis via DAP pathway; (S)-tetrahydrodipicolinate from L-aspartate: step 3/4. Functionally, catalyzes the condensation of (S)-aspartate-beta-semialdehyde [(S)-ASA] and pyruvate to 4-hydroxy-tetrahydrodipicolinate (HTPA). In Thermotoga sp. (strain RQ2), this protein is 4-hydroxy-tetrahydrodipicolinate synthase.